A 392-amino-acid polypeptide reads, in one-letter code: Ameloblastin (392 aa).

The signal sequence occupies residues Met-1 to Ala-26. A Hydroxyproline modification is found at Pro-37. Ser-43 carries the post-translational modification Phosphoserine. 3 disordered regions span residues Phe-86–Lys-109, Thr-247–Pro-280, and Thr-349–Pro-392. Over residues Gln-97–Lys-109 the composition is skewed to low complexity. Over residues Val-359–Gln-381 the composition is skewed to polar residues. The span at Ile-382–Pro-392 shows a compositional bias: basic and acidic residues.

This sequence belongs to the ameloblastin family.

The protein resides in the secreted. It localises to the extracellular space. It is found in the extracellular matrix. Involved in the mineralization and structural organization of enamel. The chain is Ameloblastin (AMBN) from Bos taurus (Bovine).